The sequence spans 333 residues: DNA-directed RNA polymerase subunit alpha (333 aa).

The tract at residues 1–234 (MQISVNEFLT…QQLAAFVDLK (234 aa)) is alpha N-terminal domain (alpha-NTD). The segment at 248-333 (IDPILLRPVD…SLKKDDKATA (86 aa)) is alpha C-terminal domain (alpha-CTD).

The protein belongs to the RNA polymerase alpha chain family. Homodimer. The RNAP catalytic core consists of 2 alpha, 1 beta, 1 beta' and 1 omega subunit. When a sigma factor is associated with the core the holoenzyme is formed, which can initiate transcription.

The catalysed reaction is RNA(n) + a ribonucleoside 5'-triphosphate = RNA(n+1) + diphosphate. In terms of biological role, DNA-dependent RNA polymerase catalyzes the transcription of DNA into RNA using the four ribonucleoside triphosphates as substrates. This is DNA-directed RNA polymerase subunit alpha from Pseudomonas syringae pv. tomato (strain ATCC BAA-871 / DC3000).